Consider the following 512-residue polypeptide: Protein SHC1 (512 aa).

Residues Glu-101 to Ala-113 are compositionally biased toward acidic residues. Disordered stretches follow at residues Glu-101–Gln-122 and Asp-144–Ala-164. Sel1-like repeat units lie at residues Pro-318–His-353, Ile-354–His-389, Pro-390–Ser-429, and Cys-433–His-470.

This sequence belongs to the SKT5 family.

The protein resides in the cytoplasm. Its subcellular location is the cytoplasmic granule membrane. Required for the activation of chitin synthase III (CHS3) activity during the sporulation process. The chain is Protein SHC1 (SHC1) from Saccharomyces cerevisiae (strain ATCC 204508 / S288c) (Baker's yeast).